The primary structure comprises 301 residues: Probable alpha-L-glutamate ligase (301 aa).

The 184-residue stretch at 104–287 (LQLLSRKGVG…IAGMVIDFIE (184 aa)) folds into the ATP-grasp domain. Residues K141, 178-179 (EY), D187, and 211-213 (RSN) each bind ATP. 3 residues coordinate Mg(2+): D248, E260, and N262. Positions 248, 260, and 262 each coordinate Mn(2+).

The protein belongs to the RimK family. Mg(2+) is required as a cofactor. Requires Mn(2+) as cofactor.

In Pseudoalteromonas translucida (strain TAC 125), this protein is Probable alpha-L-glutamate ligase.